The chain runs to 557 residues: Arginine--tRNA ligase (557 aa).

The short motif at 132 to 142 (ANPTGNLHLGH) is the 'HIGH' region element.

The protein belongs to the class-I aminoacyl-tRNA synthetase family. In terms of assembly, monomer.

The protein localises to the cytoplasm. It catalyses the reaction tRNA(Arg) + L-arginine + ATP = L-arginyl-tRNA(Arg) + AMP + diphosphate. The chain is Arginine--tRNA ligase from Geobacillus thermodenitrificans (strain NG80-2).